Reading from the N-terminus, the 114-residue chain is Large ribosomal subunit protein eL30 (114 aa).

Belongs to the eukaryotic ribosomal protein eL30 family.

The sequence is that of Large ribosomal subunit protein eL30 (RPL30) from Branchiostoma belcheri (Amphioxus).